A 101-amino-acid chain; its full sequence is Large ribosomal subunit protein bL21 (101 aa).

It belongs to the bacterial ribosomal protein bL21 family. Part of the 50S ribosomal subunit. Contacts protein L20.

Functionally, this protein binds to 23S rRNA in the presence of protein L20. The protein is Large ribosomal subunit protein bL21 of Thermus thermophilus (strain ATCC BAA-163 / DSM 7039 / HB27).